Here is a 1501-residue protein sequence, read N- to C-terminus: Opaque-specific ABC transporter CDR3 (1501 aa).

Residues 1–502 lie on the Cytoplasmic side of the membrane; it reads MAKTSQAEGQ…KRYWDRMRGD (502 aa). The interval 58-87 is disordered; it reads TYTTATMHPNGINPISDKTDPTLDPESPSF. Positions 140–395 constitute an ABC transporter 1 domain; the sequence is KYARNIFNKF…FKKMGFVCQD (256 aa). A helical transmembrane segment spans residues 503 to 523; it reads IIVPLSTVAGNIAMALILSSV. N-linked (GlcNAc...) asparagine glycosylation occurs at asparagine 530. The next 5 helical transmembrane spans lie at 540–560, 589–609, 614–634, 653–673, and 755–775; these read VMYY…YNMY, FPLK…MVNF, GAFF…SHLF, LLLF…YMLG, and FGVL…FVQT. The Cytoplasmic portion of the chain corresponds to 776 to 1175; sequence NKSSISKGET…LFQQYWRTPS (400 aa). The region spanning 840–1083 is the ABC transporter 2 domain; sequence FHWRNLTYTV…LIEYFERNGA (244 aa). 876 to 883 lines the ATP pocket; the sequence is GASGAGKT. Helical transmembrane passes span 1176-1196, 1212-1232, 1261-1281, 1297-1317, 1325-1345, 1353-1375, and 1451-1471; these read YIYS…FTYY, IFSM…LFVT, IPYQ…PVGL, LMWL…QFCI, YAAN…GVIA, FWVF…SIGL, and GIFI…YWLF.

This sequence belongs to the ABC transporter superfamily. ABCG family. PDR (TC 3.A.1.205) subfamily.

The protein resides in the membrane. This Candida albicans (Yeast) protein is Opaque-specific ABC transporter CDR3 (CDR3).